Here is a 296-residue protein sequence, read N- to C-terminus: Small ribosomal subunit biogenesis GTPase RsgA (296 aa).

Positions 65–226 (TNELIRPPIS…VADTPGFSSL (162 aa)) constitute a CP-type G domain. GTP contacts are provided by residues 114–117 (TKMD) and 169–177 (GQSGVGKSS). Residues cysteine 250, cysteine 255, histidine 257, and cysteine 263 each contribute to the Zn(2+) site.

Belongs to the TRAFAC class YlqF/YawG GTPase family. RsgA subfamily. As to quaternary structure, monomer. Associates with 30S ribosomal subunit, binds 16S rRNA. It depends on Zn(2+) as a cofactor.

It localises to the cytoplasm. In terms of biological role, one of several proteins that assist in the late maturation steps of the functional core of the 30S ribosomal subunit. Helps release RbfA from mature subunits. May play a role in the assembly of ribosomal proteins into the subunit. Circularly permuted GTPase that catalyzes slow GTP hydrolysis, GTPase activity is stimulated by the 30S ribosomal subunit. This Bacillus velezensis (strain DSM 23117 / BGSC 10A6 / LMG 26770 / FZB42) (Bacillus amyloliquefaciens subsp. plantarum) protein is Small ribosomal subunit biogenesis GTPase RsgA.